Here is a 604-residue protein sequence, read N- to C-terminus: MIRTHDAGSLRATDAGTTVTLAGWVARRRDHGGVIFVDLRDGSGVAQVVLREEDAHVLRNEYCVRITGEVTRRPEGNENPELATGEVEVTADELEVLSEAAPLPLPVDDQIEAGDDIRLRYRYLDLRRSGPANALRLRSRANQIARTVLHERDFLEIETPTLTRSTPEGARDFLVPVRLQPGTWYALPQSPQLFKQLLMVGGMERYYQIARCYRDEDFRADRQPEFTQLDIEMSFVTEDDVIDLGEAIVSRLWRQLAGHQITRPIPRITWHDAMARYGSDKPDLRYGVELTELTDYLRGTRFRVFAGAIEAGGYVGAVVMPGGAAQSRKELDGWQDWAKARGAKGLAYVVLDAETGEARGPVAKNLSAEHLAGLADAVGAKPGDAIFFAAGAESRAAQELLGAARVEIARRANLVDESAWAFCWVVDAPMFERVSDSEEGGWTAVHHPFTAPNAEWVDRFEEAPDRALAYAYDIVCNGNEIGGGSIRIHRGDVQQRVFDLLGITPEQARDKFGFLLEAFKYGPPPHGGIALGWDRICMLLAGADSIREVIAFPKTRGGFDPLTSAPTPITAAQRLEAGVDARPKPEARAQAGTAGPAAPVADPT.

Glutamate 168 contacts L-aspartate. Positions 192–195 (QLFK) are aspartate. Arginine 214 provides a ligand contact to L-aspartate. ATP contacts are provided by residues 214 to 216 (RDE) and glutamine 223. Position 446 (histidine 446) interacts with L-aspartate. An ATP-binding site is contributed by glutamate 480. Arginine 487 contacts L-aspartate. ATP is bound at residue 532-535 (GWDR). The segment at 575-604 (LEAGVDARPKPEARAQAGTAGPAAPVADPT) is disordered. The segment covering 577–587 (AGVDARPKPEA) has biased composition (basic and acidic residues). Residues 588 to 604 (RAQAGTAGPAAPVADPT) show a composition bias toward low complexity.

Belongs to the class-II aminoacyl-tRNA synthetase family. Type 1 subfamily. As to quaternary structure, homodimer.

Its subcellular location is the cytoplasm. It carries out the reaction tRNA(Asx) + L-aspartate + ATP = L-aspartyl-tRNA(Asx) + AMP + diphosphate. Aspartyl-tRNA synthetase with relaxed tRNA specificity since it is able to aspartylate not only its cognate tRNA(Asp) but also tRNA(Asn). Reaction proceeds in two steps: L-aspartate is first activated by ATP to form Asp-AMP and then transferred to the acceptor end of tRNA(Asp/Asn). The chain is Aspartate--tRNA(Asp/Asn) ligase from Salinispora arenicola (strain CNS-205).